The following is a 180-amino-acid chain: Cell number regulator 7 (180 aa).

The helical transmembrane segment at 80–102 threads the bilayer; sequence AAAGAIYTLLACFTGFQCHWIYS.

It belongs to the cornifelin family. As to expression, expressed in roots, leaves, immature ears and silks. Detected preferentially in silks.

Its subcellular location is the membrane. In Zea mays (Maize), this protein is Cell number regulator 7 (CNR7).